The sequence spans 1755 residues: Transposon Ty1-PL Gag-Pol polyprotein (1755 aa).

Polar residues-rich tracts occupy residues 1-23, 48-60, and 127-152; these read MESQQLSQHSPISHGSACASVTS, TKANSQQTTTPAS, and QSQFPQYPSSVGTPLSTPSPESGNTF. Disordered regions lie at residues 1–93, 126–174, and 352–421; these read MESQ…MMTQ, PQSQ…PPPM, and GSRN…SKST. The segment covering 153 to 165 has biased composition (low complexity); it reads TDSSSADSDMTST. The tract at residues 299–401 is RNA-binding; that stretch reads NNGIHINNKV…NSKSKTARAH (103 aa). Positions 402 to 418 are enriched in low complexity; sequence NVSTSNNSPSTDNDSIS. S416 carries the phosphoserine modification. D461 serves as the catalytic For protease activity; shared with dimeric partner. Residues 583–640 are integrase-type zinc finger-like; the sequence is NVHTSESTRKYPYPFIHRMLAHANAQTIRYSLKNNTITYFNESDVDWSSAIDYQCPDC. An Integrase catalytic domain is found at 660–835; that stretch reads NSYEPFQYLH…AGLDISTLLP (176 aa). Mg(2+)-binding residues include D671 and D736. Disordered regions lie at residues 956-1087, 1092-1111, and 1130-1187; these read SKAV…ETEK, RSPSIDASPPENNSSHNIVP, and DLPL…DNET. Over residues 960–969 the composition is skewed to low complexity; the sequence is SPTDSTPPST. Over residues 1005–1015 the composition is skewed to polar residues; that stretch reads STPQISNIEST. The segment covering 1038 to 1053 has biased composition (basic and acidic residues); it reads ESSHASKSKDFRHSDS. Polar residues-rich tracts occupy residues 1054–1082 and 1101–1111; these read YSENETNHTNVPISSTGGTNNKTVPQISD and PENNSSHNIVP. The Bipartite nuclear localization signal signature appears at 1178–1212; the sequence is KKRSLEDNETEIKVSRDTWNTKNMRSLEPPRSKKR. The region spanning 1338 to 1476 is the Reverse transcriptase Ty1/copia-type domain; it reads NNYYITQLDI…DILGLEIKYQ (139 aa). Mg(2+) is bound by residues D1346, D1427, D1428, D1610, E1652, and D1685. Residues 1610–1752 enclose the RNase H Ty1/copia-type domain; it reads DASYGNQPYY…IKTFKLLTNK (143 aa).

In terms of assembly, the capsid protein forms a homotrimer, from which the VLPs are assembled. The protease is a homodimer, whose active site consists of two apposed aspartic acid residues. Post-translationally, initially, virus-like particles (VLPs) are composed of the structural unprocessed proteins Gag and Gag-Pol, and also contain the host initiator methionine tRNA (tRNA(i)-Met) which serves as a primer for minus-strand DNA synthesis, and a dimer of genomic Ty RNA. Processing of the polyproteins occurs within the particle and proceeds by an ordered pathway, called maturation. First, the protease (PR) is released by autocatalytic cleavage of the Gag-Pol polyprotein yielding capsid protein p45 and a Pol-p154 precursor protein. This cleavage is a prerequisite for subsequent processing of Pol-p154 at the remaining sites to release the mature structural and catalytic proteins. Maturation takes place prior to the RT reaction and is required to produce transposition-competent VLPs.

Its subcellular location is the cytoplasm. The protein localises to the nucleus. The catalysed reaction is DNA(n) + a 2'-deoxyribonucleoside 5'-triphosphate = DNA(n+1) + diphosphate. The enzyme catalyses Endonucleolytic cleavage to 5'-phosphomonoester.. Its function is as follows. Capsid protein (CA) is the structural component of the virus-like particle (VLP), forming the shell that encapsulates the retrotransposons dimeric RNA genome. The particles are assembled from trimer-clustered units and there are holes in the capsid shells that allow for the diffusion of macromolecules. CA also has nucleocapsid-like chaperone activity, promoting primer tRNA(i)-Met annealing to the multipartite primer-binding site (PBS), dimerization of Ty1 RNA and initiation of reverse transcription. In terms of biological role, the aspartyl protease (PR) mediates the proteolytic cleavages of the Gag and Gag-Pol polyproteins after assembly of the VLP. Reverse transcriptase/ribonuclease H (RT) is a multifunctional enzyme that catalyzes the conversion of the retro-elements RNA genome into dsDNA within the VLP. The enzyme displays a DNA polymerase activity that can copy either DNA or RNA templates, and a ribonuclease H (RNase H) activity that cleaves the RNA strand of RNA-DNA heteroduplexes during plus-strand synthesis and hydrolyzes RNA primers. The conversion leads to a linear dsDNA copy of the retrotransposon that includes long terminal repeats (LTRs) at both ends. Functionally, integrase (IN) targets the VLP to the nucleus, where a subparticle preintegration complex (PIC) containing at least integrase and the newly synthesized dsDNA copy of the retrotransposon must transit the nuclear membrane. Once in the nucleus, integrase performs the integration of the dsDNA into the host genome. This chain is Transposon Ty1-PL Gag-Pol polyprotein (TY1B-PL), found in Saccharomyces cerevisiae (strain ATCC 204508 / S288c) (Baker's yeast).